Here is a 141-residue protein sequence, read N- to C-terminus: Oleosin L (141 aa).

3 consecutive transmembrane segments (helical) span residues valine 23–alanine 43, valine 46–valine 66, and alanine 74–valine 94. A Proline-knot motif is present at residues proline 54–proline 65.

The protein belongs to the oleosin family. Expressed in megagametophytes (at protein level).

Its subcellular location is the lipid droplet. It is found in the membrane. This Pinus massoniana (Chinese red pine) protein is Oleosin L.